The sequence spans 319 residues: Large ribosomal subunit protein eL8 (319 aa).

The residue at position 87 (K87) is an N6-acetyllysine. A Glycyl lysine isopeptide (Lys-Gly) (interchain with G-Cter in SUMO2) cross-link involves residue K101. K150 is modified (N6-acetyllysine; alternate). K150 participates in a covalent cross-link: Glycyl lysine isopeptide (Lys-Gly) (interchain with G-Cter in SUMO2); alternate. K178 is covalently cross-linked (Glycyl lysine isopeptide (Lys-Gly) (interchain with G-Cter in SUMO2)). An N6-acetyllysine modification is found at K270. K298 is covalently cross-linked (Glycyl lysine isopeptide (Lys-Gly) (interchain with G-Cter in SUMO2)).

This sequence belongs to the eukaryotic ribosomal protein eL8 family. Component of the large ribosomal subunit. Interacts with CRY1. Interacts with DICER1, AGO2, TARBP2, MOV10 and EIF6; they form a large RNA-induced silencing complex (RISC).

The protein resides in the cytoplasm. Functionally, component of the large ribosomal subunit. The ribosome is a large ribonucleoprotein complex responsible for the synthesis of proteins in the cell. This Oryctolagus cuniculus (Rabbit) protein is Large ribosomal subunit protein eL8 (RPL7A).